The following is a 98-amino-acid chain: Large ribosomal subunit protein uL23 (98 aa).

Belongs to the universal ribosomal protein uL23 family. In terms of assembly, part of the 50S ribosomal subunit. Contacts protein L29, and trigger factor when it is bound to the ribosome.

Its function is as follows. One of the early assembly proteins it binds 23S rRNA. One of the proteins that surrounds the polypeptide exit tunnel on the outside of the ribosome. Forms the main docking site for trigger factor binding to the ribosome. This Frankia casuarinae (strain DSM 45818 / CECT 9043 / HFP020203 / CcI3) protein is Large ribosomal subunit protein uL23.